A 408-amino-acid polypeptide reads, in one-letter code: Argininosuccinate synthase (408 aa).

Residues 10-18 (AYSGGLDTS) and Ala-37 each bind ATP. Tyr-90 and Ser-95 together coordinate L-citrulline. Gly-120 is an ATP binding site. Positions 122, 126, and 127 each coordinate L-aspartate. Residue Asn-126 coordinates L-citrulline. L-citrulline is bound by residues Arg-130, Ser-181, Ser-190, Glu-266, and Tyr-278.

It belongs to the argininosuccinate synthase family. Type 1 subfamily. Homotetramer.

The protein localises to the cytoplasm. It carries out the reaction L-citrulline + L-aspartate + ATP = 2-(N(omega)-L-arginino)succinate + AMP + diphosphate + H(+). The protein operates within amino-acid biosynthesis; L-arginine biosynthesis; L-arginine from L-ornithine and carbamoyl phosphate: step 2/3. This Chromobacterium violaceum (strain ATCC 12472 / DSM 30191 / JCM 1249 / CCUG 213 / NBRC 12614 / NCIMB 9131 / NCTC 9757 / MK) protein is Argininosuccinate synthase.